We begin with the raw amino-acid sequence, 174 residues long: uncharacterized protein (174 aa).

This is an uncharacterized protein from Homo sapiens (Human).